The chain runs to 55 residues: Large ribosomal subunit protein bL33 (55 aa).

It belongs to the bacterial ribosomal protein bL33 family.

This is Large ribosomal subunit protein bL33 from Proteus mirabilis (strain HI4320).